The following is a 164-amino-acid chain: ATP synthase subunit b (164 aa).

Residues 4 to 24 (IHFDLTLVVQVLSFLLLVYIL) form a helical membrane-spanning segment.

It belongs to the ATPase B chain family. In terms of assembly, F-type ATPases have 2 components, F(1) - the catalytic core - and F(0) - the membrane proton channel. F(1) has five subunits: alpha(3), beta(3), gamma(1), delta(1), epsilon(1). F(0) has three main subunits: a(1), b(2) and c(10-14). The alpha and beta chains form an alternating ring which encloses part of the gamma chain. F(1) is attached to F(0) by a central stalk formed by the gamma and epsilon chains, while a peripheral stalk is formed by the delta and b chains.

It localises to the cell membrane. Functionally, f(1)F(0) ATP synthase produces ATP from ADP in the presence of a proton or sodium gradient. F-type ATPases consist of two structural domains, F(1) containing the extramembraneous catalytic core and F(0) containing the membrane proton channel, linked together by a central stalk and a peripheral stalk. During catalysis, ATP synthesis in the catalytic domain of F(1) is coupled via a rotary mechanism of the central stalk subunits to proton translocation. Its function is as follows. Component of the F(0) channel, it forms part of the peripheral stalk, linking F(1) to F(0). The polypeptide is ATP synthase subunit b (Desulfitobacterium hafniense (strain Y51)).